Reading from the N-terminus, the 984-residue chain is Putative formate dehydrogenase SAR2393 (984 aa).

The 2Fe-2S ferredoxin-type domain occupies 3-79 (EHLVVTLDGK…PMTVNTVNND (77 aa)). Residues cysteine 37, cysteine 48, cysteine 51, and cysteine 63 each contribute to the [2Fe-2S] cluster site. A 4Fe-4S His(Cys)3-ligated-type domain is found at 79 to 119 (DVKDAQKEALDRILEKHMLYCTVCDYNNGDCEIHNTMDAWG). [4Fe-4S] cluster is bound by residues histidine 95, cysteine 99, cysteine 102, cysteine 109, cysteine 147, cysteine 150, cysteine 153, cysteine 157, cysteine 190, cysteine 193, cysteine 196, cysteine 200, cysteine 264, cysteine 267, cysteine 271, and cysteine 299. 4Fe-4S ferredoxin-type domains follow at residues 138–165 (PFYR…LNET) and 181–211 (NDVP…VNME). The tract at residues 252-984 (MRKERIKKTK…YVFPGNQVDK (733 aa)) is formate dehydrogenase. One can recognise a 4Fe-4S Mo/W bis-MGD-type domain in the interval 257 to 313 (IKKTKTVCTYCGVGCSFEVWTKDREILKVQPSHDSPANKIATCVKGKFSWGHINSDQ).

In the C-terminal section; belongs to the prokaryotic molybdopterin-containing oxidoreductase family. [2Fe-2S] cluster serves as cofactor. The cofactor is [4Fe-4S] cluster. Mo-bis(molybdopterin guanine dinucleotide) is required as a cofactor.

It carries out the reaction formate + NAD(+) = CO2 + NADH. This Staphylococcus aureus (strain MRSA252) protein is Putative formate dehydrogenase SAR2393.